We begin with the raw amino-acid sequence, 103 residues long: Large ribosomal subunit protein bL21 (103 aa).

It belongs to the bacterial ribosomal protein bL21 family. As to quaternary structure, part of the 50S ribosomal subunit. Contacts protein L20.

This protein binds to 23S rRNA in the presence of protein L20. This is Large ribosomal subunit protein bL21 from Desulforudis audaxviator (strain MP104C).